A 222-amino-acid chain; its full sequence is MKKYINVAIDGPSGSGKSTAAKGLANKLGFLYINTGLMYRAYAYFLNENNLDINTNETACIEAIKNARFIFNGDDVKIDDQDVSDILRSNDVAMLASVVAANAKIRNLATNEQRKIASENNVVMDGRDIGSIVLVDADLKFYLNTSIQTRAKRRLAQNKDIEKLDYESIYNDIKERDYRDMTRDIAPLKKAIDAIEIFNDNMNLDQCVAHLYEIYLNKIKKS.

11-19 (GPSGSGKST) serves as a coordination point for ATP.

It belongs to the cytidylate kinase family. Type 1 subfamily.

It localises to the cytoplasm. It carries out the reaction CMP + ATP = CDP + ADP. The catalysed reaction is dCMP + ATP = dCDP + ADP. The polypeptide is Cytidylate kinase (Ureaplasma urealyticum serovar 10 (strain ATCC 33699 / Western)).